The chain runs to 245 residues: Uridylate kinase (245 aa).

An ATP-binding site is contributed by 16-19 (KLSG). The tract at residues 24–29 (GDNGFG) is involved in allosteric activation by GTP. Gly-59 lines the UMP pocket. Residues Gly-60 and Arg-64 each coordinate ATP. UMP-binding positions include Asp-78 and 139–146 (NGAPFFTT). Residues Asn-167, Tyr-173, and Asp-176 each contribute to the ATP site.

It belongs to the UMP kinase family. Homohexamer.

It localises to the cytoplasm. The catalysed reaction is UMP + ATP = UDP + ADP. It participates in pyrimidine metabolism; CTP biosynthesis via de novo pathway; UDP from UMP (UMPK route): step 1/1. Allosterically activated by GTP. Inhibited by UTP. Its function is as follows. Catalyzes the reversible phosphorylation of UMP to UDP. This chain is Uridylate kinase, found in Deinococcus radiodurans (strain ATCC 13939 / DSM 20539 / JCM 16871 / CCUG 27074 / LMG 4051 / NBRC 15346 / NCIMB 9279 / VKM B-1422 / R1).